Here is a 377-residue protein sequence, read N- to C-terminus: Carbamoyl phosphate synthase small chain (377 aa).

Residues 1-186 form a CPSase region; the sequence is MSTPALLVLA…LGKGFVTPDE (186 aa). L-glutamine-binding residues include Ser-47, Gly-238, and Gly-240. Residues 190–377 enclose the Glutamine amidotransferase type-1 domain; sequence HVVAYDFGVK…IGNMKAAKRA (188 aa). Catalysis depends on Cys-266, which acts as the Nucleophile. Positions 267, 270, 308, 310, and 311 each coordinate L-glutamine. Active-site residues include His-350 and Glu-352.

This sequence belongs to the CarA family. In terms of assembly, composed of two chains; the small (or glutamine) chain promotes the hydrolysis of glutamine to ammonia, which is used by the large (or ammonia) chain to synthesize carbamoyl phosphate. Tetramer of heterodimers (alpha,beta)4.

The enzyme catalyses hydrogencarbonate + L-glutamine + 2 ATP + H2O = carbamoyl phosphate + L-glutamate + 2 ADP + phosphate + 2 H(+). It carries out the reaction L-glutamine + H2O = L-glutamate + NH4(+). Its pathway is amino-acid biosynthesis; L-arginine biosynthesis; carbamoyl phosphate from bicarbonate: step 1/1. It participates in pyrimidine metabolism; UMP biosynthesis via de novo pathway; (S)-dihydroorotate from bicarbonate: step 1/3. In terms of biological role, small subunit of the glutamine-dependent carbamoyl phosphate synthetase (CPSase). CPSase catalyzes the formation of carbamoyl phosphate from the ammonia moiety of glutamine, carbonate, and phosphate donated by ATP, constituting the first step of 2 biosynthetic pathways, one leading to arginine and/or urea and the other to pyrimidine nucleotides. The small subunit (glutamine amidotransferase) binds and cleaves glutamine to supply the large subunit with the substrate ammonia. This Neisseria meningitidis serogroup B (strain ATCC BAA-335 / MC58) protein is Carbamoyl phosphate synthase small chain.